Here is a 1002-residue protein sequence, read N- to C-terminus: Hypoxia up-regulated protein 1 (1002 aa).

A signal peptide spans 1–23 (MARAPRWMLGWLLLACCVPHTEP). Disordered regions lie at residues 576–698 (LFGG…PKKQ) and 918–1002 (KPKP…NDEL). Basic and acidic residues predominate over residues 643-675 (PPKEESQKNEEGEKSEARDPKEDKETVNEEELS). Residues 933 to 947 (GKNATGTSESENTIP) are compositionally biased toward polar residues. Composition is skewed to basic and acidic residues over residues 951 to 962 (GKQEEKPEDISP) and 983 to 1002 (SSKK…NDEL). The Prevents secretion from ER signature appears at 999 to 1002 (NDEL).

This sequence belongs to the heat shock protein 70 family.

It is found in the endoplasmic reticulum lumen. Its function is as follows. Has a pivotal role in cytoprotective cellular mechanisms triggered by oxygen deprivation. Promotes HSPA5/BiP-mediated ATP nucleotide exchange and thereby activates the unfolded protein response (UPR) pathway in the presence of endoplasmic reticulum stress. May play a role as a molecular chaperone and participate in protein folding. In Gallus gallus (Chicken), this protein is Hypoxia up-regulated protein 1 (HYOU1).